A 218-amino-acid polypeptide reads, in one-letter code: Acetyl- and succinyl-CoA transferase MT0822 (218 aa).

The N-acetyltransferase domain occupies 32 to 188 (DTILEGVHDP…EALLFRLTRD (157 aa)). Substrate contacts are provided by residues glutamine 94, 109-113 (SGSWL), 119-124 (GHGYGT), 145-151 (SRSFVDN), and arginine 160.

Dimer of dimers.

The catalysed reaction is L-lysyl-[protein] + acetyl-CoA = N(6)-acetyl-L-lysyl-[protein] + CoA + H(+). It carries out the reaction succinyl-CoA + L-lysyl-[protein] = N(6)-succinyl-L-lysyl-[protein] + CoA + H(+). Its function is as follows. Acetylates and succinylates nucleoid-associated, DNA-binding protein HupB. The sequence is that of Acetyl- and succinyl-CoA transferase MT0822 from Mycobacterium tuberculosis (strain CDC 1551 / Oshkosh).